Consider the following 325-residue polypeptide: HPr kinase/phosphorylase (325 aa).

Catalysis depends on residues H152 and K173. G167–S174 contributes to the ATP binding site. Mg(2+) is bound at residue S174. The Proton acceptor; for phosphorylation activity. Proton donor; for dephosphorylation activity role is filled by D191. Residues L215 to D224 are important for the catalytic mechanism of both phosphorylation and dephosphorylation. E216 is a Mg(2+) binding site. R258 is an active-site residue. The interval A279–R284 is important for the catalytic mechanism of dephosphorylation.

This sequence belongs to the HPrK/P family. In terms of assembly, homohexamer. Requires Mg(2+) as cofactor.

The catalysed reaction is [HPr protein]-L-serine + ATP = [HPr protein]-O-phospho-L-serine + ADP + H(+). It catalyses the reaction [HPr protein]-O-phospho-L-serine + phosphate + H(+) = [HPr protein]-L-serine + diphosphate. Catalyzes the ATP- as well as the pyrophosphate-dependent phosphorylation of a specific serine residue in HPr, a phosphocarrier protein of the phosphoenolpyruvate-dependent sugar phosphotransferase system (PTS). HprK/P also catalyzes the pyrophosphate-producing, inorganic phosphate-dependent dephosphorylation (phosphorolysis) of seryl-phosphorylated HPr (P-Ser-HPr). This chain is HPr kinase/phosphorylase, found in Leptothrix cholodnii (strain ATCC 51168 / LMG 8142 / SP-6) (Leptothrix discophora (strain SP-6)).